Here is a 311-residue protein sequence, read N- to C-terminus: MNPKKLVIASRESLLAMWQAKHIQGRLKALYPDCEVEILGMTTRGDQILDKTLSKVGGKGLFVKELEQALYDGRADLAVHSIKDVPMDLPEGFALAAIGERANPFDAFVSNQYARLEEMPEGAVVGTSSLRREAQLRARYPHLLIKPLRGNVQTRLSKLDNGEYDAIILAAAGLQRLKLDGRIRMILSESDSLPAAGQGALGIEIAAHREDLYEVLKPLNHGVTNACVTAERALARALGGSCQVPLAAYCTEENGLLTLRGLVGHPDGSVVLRADAQAPAEYADALGRAVAKKLADDGARELIGAVLNTEN.

C242 carries the S-(dipyrrolylmethanemethyl)cysteine modification.

This sequence belongs to the HMBS family. As to quaternary structure, monomer. The cofactor is dipyrromethane.

It carries out the reaction 4 porphobilinogen + H2O = hydroxymethylbilane + 4 NH4(+). Its pathway is porphyrin-containing compound metabolism; protoporphyrin-IX biosynthesis; coproporphyrinogen-III from 5-aminolevulinate: step 2/4. Its function is as follows. Tetrapolymerization of the monopyrrole PBG into the hydroxymethylbilane pre-uroporphyrinogen in several discrete steps. The chain is Porphobilinogen deaminase (hemC) from Neisseria meningitidis serogroup A / serotype 4A (strain DSM 15465 / Z2491).